We begin with the raw amino-acid sequence, 873 residues long: Potassium voltage-gated channel subfamily KQT member 3 (873 aa).

Positions 1-41 are disordered; the sequence is MGLKARRAAGAAGGGGGEGGGGGGGAANPAGGDSAVAGDEE. Residues 1-121 lie on the Cytoplasmic side of the membrane; sequence MGLKARRAAG…IYDALERPRG (121 aa). A compositionally biased stretch (gly residues) spans 11–26; the sequence is AAGGGGGEGGGGGGGA. Thr82 is subject to Phosphothreonine. Residues 122-144 form a helical membrane-spanning segment; it reads WALLYHALVFLIVLGCLILAVLT. Topologically, residues 145 to 154 are extracellular; sequence TFKEYETVSG. Residues 155 to 176 form a helical membrane-spanning segment; sequence DWLLLLETFAIFIFGAEFALRI. The Cytoplasmic portion of the chain corresponds to 177 to 194; it reads WAAGCCCRYKGWRGRLKF. Residues 195–214 form a helical membrane-spanning segment; sequence ARKPLCMLDIFVLIASVPVV. At 215-226 the chain is on the extracellular side; that stretch reads AVGNQGNVLATS. A helical; Voltage-sensor transmembrane segment spans residues 227-245; that stretch reads LRSLRFLQILRMLRMDRRG. Residue Arg244 participates in a 1,2-diacyl-sn-glycero-3-phospho-(1D-myo-inositol-4,5-bisphosphate) binding. Residues 246 to 257 are Cytoplasmic-facing; that stretch reads GTWKLLGSAICA. The helical transmembrane segment at 258–283 threads the bilayer; the sequence is HSKELITAWYIGFLTLILSSFLVYLV. Position 260 (Lys260) interacts with a 1,2-diacyl-sn-glycero-3-phospho-(1D-myo-inositol-4,5-bisphosphate). Over 284–303 the chain is Extracellular; sequence EKDVPEMDAQGEEMKEEFET. Residues 304–316 constitute an intramembrane region (pore-forming); it reads YADALWWGLITLA. Residues 317–322 carry the Selectivity filter motif; sequence TIGYGD. Over 317 to 327 the chain is Extracellular; the sequence is TIGYGDKTPKT. Residues 328-354 form a helical membrane-spanning segment; it reads WEGRLIAATFSLIGVSFFALPAGILGS. Topologically, residues 355-873 are cytoplasmic; the sequence is GLALKVQEQH…SIWTPSNKPT (519 aa). The tract at residues 357-538 is mediates interaction with calmodulin; sequence ALKVQEQHRQ…RLYKKKFKET (182 aa). Lys367 serves as a coordination point for a 1,2-diacyl-sn-glycero-3-phospho-(1D-myo-inositol-4,5-bisphosphate). 3 disordered regions span residues 575–603, 723–742, and 766–873; these read PGPP…PRNE, RGGP…GSTY, and ELQG…NKPT. 3 stretches are compositionally biased toward polar residues: residues 588 to 601, 725 to 741, and 844 to 873; these read KGSA…QSPR, GPSS…SGST, and DPFT…NKPT.

This sequence belongs to the potassium channel family. KQT (TC 1.A.1.15) subfamily. Kv7.3/KCNQ3 sub-subfamily. In terms of assembly, heterotetramer with KCNQ2; forms heterotetrameric native M-channel responsible for the M-current. Interacts with calmodulin; the interaction is calcium-independent, constitutive and participates in the proper assembly of a functional M-channel. Heteromultimer with KCNQ5. May associate with KCNE2. Interacts with IQCJ-SCHIP1. Interacts (via the pore module) with SLC5A3/SMIT1; forms a coregulatory complex that alters ion selectivity, voltage dependence and gating kinetics of the channel. Post-translationally, KCNQ2/KCNQ3 are ubiquitinated by NEDD4L. Ubiquitination leads to protein degradation. Degradation induced by NEDD4L is inhibited by USP36. In terms of tissue distribution, expressed in dorsal root ganglion (DRG) neurons.

The protein localises to the cell membrane. The enzyme catalyses K(+)(in) = K(+)(out). The catalysed reaction is Rb(+)(in) = Rb(+)(out). It catalyses the reaction Cs(+)(in) = Cs(+)(out). It carries out the reaction Na(+)(in) = Na(+)(out). Phosphatidylinositol-4,5-bisphosphate (PIP2) potentiates the activation of KCNQ channels by enhancing the electro-mechanical coupling of the voltage-sensing domain (VSD) and the pore-forming domain (PD). In the closed state of the channel, PIP2 is anchored at the S2-S3 loop; upon channel activation, PIP2 interacts with the S4-S5 linker and is involved in channel gating. Calcium suppresses KCNQ2-KCNQ3 channel currents, with calcium-bound calmodulin inducing a change in channel configuration which leads to the reduction of channel affinity for PIP2 and subsequent current suppression. Functionally, pore-forming subunit of the voltage-gated potassium (Kv) M-channel which is responsible for the M-current, a key controller of neuronal excitability. M-channel is composed of pore-forming subunits KCNQ2 and KCNQ3 assembled as heterotetramers. The native M-current has a slowly activating and deactivating potassium conductance which plays a critical role in determining the subthreshold electrical excitability of neurons as well as the responsiveness to synaptic inputs. M-channel is selectively permeable in vitro to other cations besides potassium, in decreasing order of affinity K(+) &gt; Rb(+) &gt; Cs(+) &gt; Na(+). M-channel association with SLC5A3/SMIT1 alters channel ion selectivity, increasing Na(+) and Cs(+) permeation relative to K(+). Suppressed by activation of M1 muscarinic acetylcholine receptors. KCNQ3 also associates with KCNQ5 to form a functional channel in vitro and may also contribute to the M-current in brain. This Mus musculus (Mouse) protein is Potassium voltage-gated channel subfamily KQT member 3.